A 267-amino-acid polypeptide reads, in one-letter code: Acyl-[acyl-carrier-protein]--UDP-N-acetylglucosamine O-acyltransferase (267 aa).

Belongs to the transferase hexapeptide repeat family. LpxA subfamily. Homotrimer.

It is found in the cytoplasm. It catalyses the reaction a (3R)-hydroxyacyl-[ACP] + UDP-N-acetyl-alpha-D-glucosamine = a UDP-3-O-[(3R)-3-hydroxyacyl]-N-acetyl-alpha-D-glucosamine + holo-[ACP]. Its pathway is glycolipid biosynthesis; lipid IV(A) biosynthesis; lipid IV(A) from (3R)-3-hydroxytetradecanoyl-[acyl-carrier-protein] and UDP-N-acetyl-alpha-D-glucosamine: step 1/6. In terms of biological role, involved in the biosynthesis of lipid A, a phosphorylated glycolipid that anchors the lipopolysaccharide to the outer membrane of the cell. The protein is Acyl-[acyl-carrier-protein]--UDP-N-acetylglucosamine O-acyltransferase of Cupriavidus pinatubonensis (strain JMP 134 / LMG 1197) (Cupriavidus necator (strain JMP 134)).